The primary structure comprises 380 residues: F-box protein At4g18380 (380 aa).

The F-box domain occupies 22–70 (IDHFDNLPDSILLLIFNNIGDVKALGRCSVVSKRFHSLIPQVENVFVRV).

This is F-box protein At4g18380 from Arabidopsis thaliana (Mouse-ear cress).